The following is a 139-amino-acid chain: Small ribosomal subunit protein uS12 (139 aa).

The segment at 1-21 is disordered; that stretch reads MSTVSQLIKKRRSSKTSKTKA. Residues 8 to 18 show a composition bias toward basic residues; sequence IKKRRSSKTSK. A 3-methylthioaspartic acid modification is found at aspartate 102.

Belongs to the universal ribosomal protein uS12 family. Part of the 30S ribosomal subunit. Contacts proteins S8 and S17. May interact with IF1 in the 30S initiation complex.

Functionally, with S4 and S5 plays an important role in translational accuracy. Interacts with and stabilizes bases of the 16S rRNA that are involved in tRNA selection in the A site and with the mRNA backbone. Located at the interface of the 30S and 50S subunits, it traverses the body of the 30S subunit contacting proteins on the other side and probably holding the rRNA structure together. The combined cluster of proteins S8, S12 and S17 appears to hold together the shoulder and platform of the 30S subunit. In Aster yellows witches'-broom phytoplasma (strain AYWB), this protein is Small ribosomal subunit protein uS12.